We begin with the raw amino-acid sequence, 420 residues long: Glycogen synthase kinase-3 beta (420 aa).

Residues 1–22 show a composition bias toward polar residues; it reads MSGRPRTTSFAESCKPVQQPSA. A disordered region spans residues 1-53; that stretch reads MSGRPRTTSFAESCKPVQQPSAFGSMKVSRDKDGSKVTTVVATPGQGPDRPQE. Serine 9 carries the phosphoserine; by PKB/AKT1, RPS6KA3 and SGK3 modification. The S-palmitoyl cysteine moiety is linked to residue cysteine 14. Residues 56 to 340 enclose the Protein kinase domain; that stretch reads YTDTKVIGNG…PLEACAHSFF (285 aa). ATP-binding positions include 62-70 and lysine 85; that span reads IGNGSFGVV. Catalysis depends on aspartate 181, which acts as the Proton acceptor. Phosphotyrosine is present on tyrosine 216. Residues 385–420 form a disordered region; the sequence is QAAASPPANATAASDTNAGDRGQTNNAASASASNST. Composition is skewed to low complexity over residues 386–401 and 409–420; these read AAASPPANATAASDTN and NNAASASASNST. Residue serine 389 is modified to Phosphoserine.

Belongs to the protein kinase superfamily. CMGC Ser/Thr protein kinase family. GSK-3 subfamily. In terms of assembly, monomer. Interacts with DAB2IP (via C2 domain); the interaction stimulates GSK3B kinase activation. Interacts (via C2 domain) with PPP2CA. Interacts with CABYR, MMP2, MUC1, NIN and PRUNE1. Interacts with AXIN1; the interaction mediates hyperphosphorylation of CTNNB1 leading to its ubiquitination and destruction. Interacts with and phosphorylates SNAI1. Interacts with DNM1L (via a C-terminal domain). Interacts with ARRB2. Interacts with DISC1. Found in a complex composed of MACF1, APC, AXIN1, CTNNB1 and GSK3B. Interacts with SGK3. Interacts with the CLOCK-BMAL1 heterodimer. Interacts with ZBED3. Interacts with the BMAL1. The complex composed, at least, of APC, CTNNB1 and GSK3B interacts with JPT1; the interaction requires the inactive form of GSK3B (phosphorylated at 'Ser-9'). Forms a complex composed of PRKAR2A or PRKAR2B, GSK3B and GSKIP through GSKIP interaction; facilitates PKA-induced phosphorylation and regulates GSK3B activity. Interacts with GSKIP. Interacts with GID8. Interacts with PIWIL2. Interacts with LMBR1L. Interacts with DDX3X. Interacts with BIRC2. Interacts with TNFRSF10B; TNFRSF10B stimulation inhibits GSK3B kinase activity. Found in a complex with SLC39A6, SLC39A10 and with GSK3B that controls NCAM1 phosphorylation. Interacts with PKP3 (via ARM repeats); the interaction may be involved in PKP3 protein degradation. Post-translationally, phosphorylated by AKT1 and ILK1. Upon insulin-mediated signaling, the activated PKB/AKT1 protein kinase phosphorylates and deactivates GSK3B, resulting in the dephosphorylation and activation of GYS1. Activated by phosphorylation at Tyr-216. Phosphorylation of Ser-9 in the hippocampus peaks at CT0, whereas in the liver it peaks at CT12. Inactivated by phosphorylation at Ser-9. Phosphorylated in a circadian manner in the hippocampus. In terms of processing, mono-ADP-ribosylation by PARP10 negatively regulates kinase activity. Palmitoylated. Palmitoylation by ZDHHC4 prevents AKT1-mediated phosphorylation. In terms of tissue distribution, expressed in the liver (at protein level).

Its subcellular location is the cytoplasm. It is found in the nucleus. The protein localises to the cell membrane. It carries out the reaction L-seryl-[tau protein] + ATP = O-phospho-L-seryl-[tau protein] + ADP + H(+). It catalyses the reaction L-threonyl-[tau protein] + ATP = O-phospho-L-threonyl-[tau protein] + ADP + H(+). The catalysed reaction is L-seryl-[protein] + ATP = O-phospho-L-seryl-[protein] + ADP + H(+). The enzyme catalyses L-threonyl-[protein] + ATP = O-phospho-L-threonyl-[protein] + ADP + H(+). Its activity is regulated as follows. Activated by phosphorylation at Tyr-216. In response to insulin, inhibited by phosphorylation at Ser-9 by PKB/AKT1 and RPS6KA3; phosphorylation at this site causes a conformational change, preventing access of substrates to the active site. Inhibited by IL22 treatment which also triggers phosphorylation at Ser-9, promoting inactivation. Inhibited by lithium. Functionally, constitutively active protein kinase that acts as a negative regulator in the hormonal control of glucose homeostasis, Wnt signaling and regulation of transcription factors and microtubules, by phosphorylating and inactivating glycogen synthase (GYS1 or GYS2), EIF2B, CTNNB1/beta-catenin, APC, AXIN1, DPYSL2/CRMP2, JUN, NFATC1/NFATC, MAPT/TAU and MACF1. Requires primed phosphorylation of the majority of its substrates. In skeletal muscle, contributes to insulin regulation of glycogen synthesis by phosphorylating and inhibiting GYS1 activity and hence glycogen synthesis. May also mediate the development of insulin resistance by regulating activation of transcription factors. Regulates protein synthesis by controlling the activity of initiation factor 2B (EIF2BE/EIF2B5) in the same manner as glycogen synthase. In Wnt signaling, GSK3B forms a multimeric complex with APC, AXIN1 and CTNNB1/beta-catenin and phosphorylates the N-terminus of CTNNB1 leading to its degradation mediated by ubiquitin/proteasomes. Phosphorylates JUN at sites proximal to its DNA-binding domain, thereby reducing its affinity for DNA. Phosphorylates NFATC1/NFATC on conserved serine residues promoting NFATC1/NFATC nuclear export, shutting off NFATC1/NFATC gene regulation, and thereby opposing the action of calcineurin. Phosphorylates MAPT/TAU on 'Thr-548', decreasing significantly MAPT/TAU ability to bind and stabilize microtubules. MAPT/TAU is the principal component of neurofibrillary tangles in Alzheimer disease. Plays an important role in ERBB2-dependent stabilization of microtubules at the cell cortex. Phosphorylates MACF1, inhibiting its binding to microtubules which is critical for its role in bulge stem cell migration and skin wound repair. Probably regulates NF-kappa-B (NFKB1) at the transcriptional level and is required for the NF-kappa-B-mediated anti-apoptotic response to TNF-alpha (TNF/TNFA). Negatively regulates replication in pancreatic beta-cells, resulting in apoptosis, loss of beta-cells and diabetes. Through phosphorylation of the anti-apoptotic protein MCL1, may control cell apoptosis in response to growth factors deprivation. Phosphorylates MUC1 in breast cancer cells, decreasing the interaction of MUC1 with CTNNB1/beta-catenin. Is necessary for the establishment of neuronal polarity and axon outgrowth. Phosphorylates MARK2, leading to inhibition of its activity. Phosphorylates SIK1 at 'Thr-182', leading to sustainment of its activity. Phosphorylates ZC3HAV1 which enhances its antiviral activity. Phosphorylates SNAI1, leading to its ubiquitination and proteasomal degradation. Phosphorylates SFPQ at 'Thr-687' upon T-cell activation. Phosphorylates NR1D1 st 'Ser-55' and 'Ser-59' and stabilizes it by protecting it from proteasomal degradation. Regulates the circadian clock via phosphorylation of the major clock components including BMAL1, CLOCK and PER2. Phosphorylates CLOCK AT 'Ser-427' and targets it for proteasomal degradation. Phosphorylates BMAL1 at 'Ser-17' and 'Ser-21' and primes it for ubiquitination and proteasomal degradation. Phosphorylates FBXL2 at 'Thr-404' and primes it for ubiquitination by the SCF(FBXO3) complex and proteasomal degradation. Phosphorylates OGT at 'Ser-3' or 'Ser-4' which positively regulates its activity. Phosphorylates MYCN in neuroblastoma cells which may promote its degradation. Regulates the circadian rhythmicity of hippocampal long-term potentiation and BMAL1 and PER2 expression. Acts as a regulator of autophagy by mediating phosphorylation of KAT5/TIP60 under starvation conditions, activating KAT5/TIP60 acetyltransferase activity and promoting acetylation of key autophagy regulators, such as ULK1 and RUBCNL/Pacer. Negatively regulates extrinsic apoptotic signaling pathway via death domain receptors. Promotes the formation of an anti-apoptotic complex, made of DDX3X, BRIC2 and GSK3B, at death receptors, including TNFRSF10B. The anti-apoptotic function is most effective with weak apoptotic signals and can be overcome by stronger stimulation. Phosphorylates E2F1, promoting the interaction between E2F1 and USP11, stabilizing E2F1 and promoting its activity. Phosphorylates mTORC2 complex component RICTOR at 'Ser-1235' in response to endoplasmic stress, inhibiting mTORC2. Phosphorylates FXR1, promoting FXR1 ubiquitination by the SCF(FBXO4) complex and FXR1 degradation by the proteasome. Phosphorylates interleukin-22 receptor subunit IL22RA1, preventing its proteasomal degradation. In Mus musculus (Mouse), this protein is Glycogen synthase kinase-3 beta.